Here is a 964-residue protein sequence, read N- to C-terminus: MTETASGPARGSRAKGTKAKGLRIERIHTTPGVHPYDEVEWARRDVVMTNWRDGSVNFEQRGVEFPDFWSVNAVNIVTSKYFRGAVGTPQREVSLRQLIDRIVKTYRKAGEDYKYFASPADAEIFEHELAYALLHQIFSFNSPVWFNVGTPQPQQVSACFILAVDDSMESILDWYKEEGMIFKGGSGAGLNLSRIRSSKELLSSGGNASGPVSFMRGADASAGTIKSGGATRRAAKMVILDVDHPDIEDFIETKVKEEEKIRALRDAGFDMDLGGDDITSVQYQNANNSVRVNDTFMKAVEEGGKFGLTSRMTGEVIEEVDAKSLFRKMAEAAWACADPGIQYDDTINHWHTCPESGRINGSNPCSEYMHLDNTSCNLASLNLMKFLKDDGKGRQSFEVERFAKVVELVITAMDISICFADFPTQKIGENTRAFRQLGIGYANLGALLMATGHAYDSDGGRALAGAITSLMTGTSYKRSAELAAVVGPYDGYARNAQPHQRVMKQHSDANGVAVRVDDLDTPIWAAATEAWQDVLHLGEKNGFRNAQASVIAPTGTIGLAMSCDTTGLEPDLALVKFKKLVGGGSMQIVNGTVPQALRRLGYQEEQIEAIVAHIAENGNVIDAPGLKHEHYEVFDCAMGERSISAMGHVRMMAAIQPWISGALSKTVNLPETATVEDVEEVYFEAWKMGVKALAIYRDNCKVGQPLSAKKKETEKAEVTAKTEATIREAVEKVVEYRPVRKRLPKGRPGITTSFTVGGAEGYMTANSYPDDGLGEVFLKMSKQGSTLAGMMDAFSIAVSVGLQYGVPLETYVSKFTNMRFEPAGMTDDPDVRMAQSIVDYIFRRLALDFLPFETRSALGIHSAEERQRHLETGSYEPSDDVDMDVEGLAQSAPRAQELKAVATPKAEVAAAVPAPKQAHTSAELVEMQLGIQADAPLCFSCGTKMQRAGSCYICEGCGSTSGCS.

Residues 1–21 (MTETASGPARGSRAKGTKAKG) are disordered. Residues 12–21 (SRAKGTKAKG) are compositionally biased toward basic residues. Substrate is bound by residues S142, 158–159 (AC), G187, 363–367 (NPCSE), and 553–557 (PTGTI). The cysteines at positions 159 and 376 are disulfide-linked. Catalysis depends on N363, which acts as the Proton acceptor. The active-site Cysteine radical intermediate is the C365. The active-site Proton acceptor is E367.

This sequence belongs to the ribonucleoside diphosphate reductase class-2 family. The cofactor is adenosylcob(III)alamin.

The enzyme catalyses a 2'-deoxyribonucleoside 5'-diphosphate + [thioredoxin]-disulfide + H2O = a ribonucleoside 5'-diphosphate + [thioredoxin]-dithiol. Functionally, catalyzes the reduction of ribonucleotides to deoxyribonucleotides. May function to provide a pool of deoxyribonucleotide precursors for DNA repair during oxygen limitation and/or for immediate growth after restoration of oxygen. This Streptomyces avermitilis (strain ATCC 31267 / DSM 46492 / JCM 5070 / NBRC 14893 / NCIMB 12804 / NRRL 8165 / MA-4680) protein is Vitamin B12-dependent ribonucleotide reductase (nrdJ).